Reading from the N-terminus, the 416-residue chain is PDZ and LIM domain protein 7 (416 aa).

Positions Met-1 to Gln-85 constitute a PDZ domain. 2 disordered regions span residues Cys-145–Pro-191 and Thr-202–Arg-221. Low complexity predominate over residues Pro-168–Pro-181. 3 consecutive LIM zinc-binding domains span residues Pro-239–Ala-297, Pro-298–Thr-357, and Lys-358–Val-416.

In terms of assembly, interacts with various PKC isoforms through the LIM zinc-binding domains. Interacts with TPM2. Interacts with TBX4 and TBX5.

The protein localises to the cytoplasm. The protein resides in the cytoskeleton. Its subcellular location is the myofibril. It localises to the sarcomere. It is found in the z line. May function as a scaffold on which the coordinated assembly of proteins can occur. May play a role as an adapter that, via its PDZ domain, localizes LIM-binding proteins to actin filaments of both skeletal muscle and nonmuscle tissues. May be involved in bone formation. This chain is PDZ and LIM domain protein 7 (PDLIM7), found in Gallus gallus (Chicken).